A 335-amino-acid polypeptide reads, in one-letter code: MAASLGFRGAASGLRYWSGRRRPVGSLAAVCSRSMASKTPVGFIGLGNMGNPMAKNLIKHGYPLILYDVFPDVCKEFKEAGEQVASSPADVAEKADRIITMLPSSMNSIEVYSGANGILKKVKKGSLLIDSSTIDPSVSKELAKEVEKMGAVFMDAPVSGGVGAARSGNLTFMVGGVENEFAAAQELLGCMGSNVLYCGAVGSGQSAKICNNMLLAISMIGTAEAMNLGIRSGLDPKLLAKILNMSSGRCWSSDTYNPVPGVMDGVPSSNNYQGGFGTTLMAKDLGLAQDSATSTKTPILLGSVAHQIYRMMCSKGYSKKDFSSVFQYLREEETF.

The N-terminal 35 residues, 1 to 35 (MAASLGFRGAASGLRYWSGRRRPVGSLAAVCSRSM), are a transit peptide targeting the mitochondrion. 39-68 (TPVGFIGLGNMGNPMAKNLIKHGYPLILYD) provides a ligand contact to NAD(+). Lys59 and Lys75 each carry N6-acetyllysine; alternate. An N6-succinyllysine; alternate mark is found at Lys59 and Lys75. The residue at position 94 (Lys94) is an N6-succinyllysine. Residues 102–103 (LP) and Asn107 contribute to the NAD(+) site. Lys120 bears the N6-acetyllysine mark. Position 133 (Thr133) interacts with NAD(+). Residue Lys140 is modified to N6-succinyllysine. The residue at position 144 (Lys144) is an N6-acetyllysine. At Lys148 the chain carries N6-acetyllysine; alternate. Lys148 is subject to N6-succinyllysine; alternate. Lys208 is an active-site residue. N6-acetyllysine; alternate is present on residues Lys237 and Lys241. N6-succinyllysine; alternate is present on residues Lys237 and Lys241. An NAD(+)-binding site is contributed by Lys283. The residue at position 296 (Lys296) is an N6-succinyllysine. Position 320 is an N6-acetyllysine; alternate (Lys320). Residue Lys320 is modified to N6-succinyllysine; alternate.

The protein belongs to the HIBADH-related family. 3-hydroxyisobutyrate dehydrogenase subfamily. Homodimer. In terms of tissue distribution, higher level in kidney, liver, and heart than in muscle.

It is found in the mitochondrion. It catalyses the reaction 3-hydroxy-2-methylpropanoate + NAD(+) = 2-methyl-3-oxopropanoate + NADH + H(+). It functions in the pathway amino-acid degradation; L-valine degradation. The polypeptide is 3-hydroxyisobutyrate dehydrogenase, mitochondrial (Hibadh) (Rattus norvegicus (Rat)).